We begin with the raw amino-acid sequence, 183 residues long: ATP synthase subunit delta (183 aa).

It belongs to the ATPase delta chain family. In terms of assembly, F-type ATPases have 2 components, F(1) - the catalytic core - and F(0) - the membrane proton channel. F(1) has five subunits: alpha(3), beta(3), gamma(1), delta(1), epsilon(1). F(0) has three main subunits: a(1), b(2) and c(10-14). The alpha and beta chains form an alternating ring which encloses part of the gamma chain. F(1) is attached to F(0) by a central stalk formed by the gamma and epsilon chains, while a peripheral stalk is formed by the delta and b chains.

Its subcellular location is the cell membrane. F(1)F(0) ATP synthase produces ATP from ADP in the presence of a proton or sodium gradient. F-type ATPases consist of two structural domains, F(1) containing the extramembraneous catalytic core and F(0) containing the membrane proton channel, linked together by a central stalk and a peripheral stalk. During catalysis, ATP synthesis in the catalytic domain of F(1) is coupled via a rotary mechanism of the central stalk subunits to proton translocation. In terms of biological role, this protein is part of the stalk that links CF(0) to CF(1). It either transmits conformational changes from CF(0) to CF(1) or is implicated in proton conduction. The chain is ATP synthase subunit delta from Halalkalibacterium halodurans (strain ATCC BAA-125 / DSM 18197 / FERM 7344 / JCM 9153 / C-125) (Bacillus halodurans).